The following is a 215-amino-acid chain: Guanylate kinase (215 aa).

In terms of domain architecture, Guanylate kinase-like spans 6–185 (GAILVLSGPS…SEKLLLSIAR (180 aa)). 13 to 20 (GPSGSGKS) lines the ATP pocket.

Belongs to the guanylate kinase family.

It is found in the cytoplasm. It carries out the reaction GMP + ATP = GDP + ADP. Essential for recycling GMP and indirectly, cGMP. The protein is Guanylate kinase of Wolinella succinogenes (strain ATCC 29543 / DSM 1740 / CCUG 13145 / JCM 31913 / LMG 7466 / NCTC 11488 / FDC 602W) (Vibrio succinogenes).